The chain runs to 165 residues: Crossover junction endodeoxyribonuclease RuvC (165 aa).

Residues Asp7, Glu67, and Asp140 contribute to the active site. 3 residues coordinate Mg(2+): Asp7, Glu67, and Asp140.

This sequence belongs to the RuvC family. In terms of assembly, homodimer which binds Holliday junction (HJ) DNA. The HJ becomes 2-fold symmetrical on binding to RuvC with unstacked arms; it has a different conformation from HJ DNA in complex with RuvA. In the full resolvosome a probable DNA-RuvA(4)-RuvB(12)-RuvC(2) complex forms which resolves the HJ. It depends on Mg(2+) as a cofactor.

Its subcellular location is the cytoplasm. It catalyses the reaction Endonucleolytic cleavage at a junction such as a reciprocal single-stranded crossover between two homologous DNA duplexes (Holliday junction).. In terms of biological role, the RuvA-RuvB-RuvC complex processes Holliday junction (HJ) DNA during genetic recombination and DNA repair. Endonuclease that resolves HJ intermediates. Cleaves cruciform DNA by making single-stranded nicks across the HJ at symmetrical positions within the homologous arms, yielding a 5'-phosphate and a 3'-hydroxyl group; requires a central core of homology in the junction. The consensus cleavage sequence is 5'-(A/T)TT(C/G)-3'. Cleavage occurs on the 3'-side of the TT dinucleotide at the point of strand exchange. HJ branch migration catalyzed by RuvA-RuvB allows RuvC to scan DNA until it finds its consensus sequence, where it cleaves and resolves the cruciform DNA. This is Crossover junction endodeoxyribonuclease RuvC from Dehalococcoides mccartyi (strain ATCC BAA-2266 / KCTC 15142 / 195) (Dehalococcoides ethenogenes (strain 195)).